A 507-amino-acid chain; its full sequence is Tyrosine protein-kinase src-2 (507 aa).

Over residues 1 to 10 (MGSCIGKEDP) the composition is skewed to basic and acidic residues. The disordered stretch occupies residues 1–52 (MGSCIGKEDPPPGATSPVHTSSTLGRESLPSHPRIPSIGPIAASSSGNTIDK). A lipid anchor (N-myristoyl glycine) is attached at glycine 2. Low complexity predominate over residues 35–47 (IPSIGPIAASSSG). Positions 57-118 (SQSANFVALF…PSNYVAREKS (62 aa)) constitute an SH3 domain. The region spanning 124–216 (WYFGKMRRID…GLCVNLGAPC (93 aa)) is the SH2 domain. The Protein kinase domain occupies 240 to 494 (VRLIRQIGAG…LQWKLEDLFN (255 aa)). Residues 246–254 (IGAGQFGEV) and lysine 268 each bind ATP. Aspartate 358 (proton acceptor) is an active-site residue. Tyrosine 500 carries the phosphotyrosine modification.

Belongs to the protein kinase superfamily. Tyr protein kinase family. SRC subfamily. The cofactor is Mg(2+). Requires Mn(2+) as cofactor. In terms of processing, may be phosphorylated on Tyr-500 by csk-1. Expressed in vulva, cells around anus and pharyngeal muscles.

It carries out the reaction L-tyrosyl-[protein] + ATP = O-phospho-L-tyrosyl-[protein] + ADP + H(+). May be inhibited by csk-1-mediated phosphorylation at Tyr-500. Non-receptor tyrosine-protein kinase which may play a role in larval and pharynx development. Unlike src-1, does not play a role in embryonic development. In Caenorhabditis elegans, this protein is Tyrosine protein-kinase src-2.